The sequence spans 237 residues: MDLLLGIVQGLTEFLPISSSGHLTLLSHLLKTDLNAYQTAVLHLGTLVSVVLFALDGIRRSLRSWRIILNLIVSTIPAGVFGVLFEKQIDQLFSSPRFLPLFFSATALILMFTRYSSSGEKRMENMSFLDALLVGIAQLFALFPGISRSGITVSSLLFMKYRSEDALQYSFLMSIPVVLGAGILGLGKGNVTILAPIFAFLSGLFALYVLSRSVRSGKIWQFSYYCLFVAILSYLAG.

Helical transmembrane passes span 38 to 58, 65 to 85, 92 to 112, 126 to 146, 166 to 186, 191 to 211, and 217 to 237; these read QTAV…LDGI, WRII…GVLF, LFSS…ILMF, MSFL…FPGI, ALQY…ILGL, VTIL…YVLS, and GKIW…YLAG.

This sequence belongs to the UppP family.

It is found in the cell inner membrane. The catalysed reaction is di-trans,octa-cis-undecaprenyl diphosphate + H2O = di-trans,octa-cis-undecaprenyl phosphate + phosphate + H(+). Catalyzes the dephosphorylation of undecaprenyl diphosphate (UPP). Confers resistance to bacitracin. The sequence is that of Undecaprenyl-diphosphatase from Thermotoga maritima (strain ATCC 43589 / DSM 3109 / JCM 10099 / NBRC 100826 / MSB8).